The chain runs to 199 residues: Protein-methionine-sulfoxide reductase heme-binding subunit MsrQ (199 aa).

4 consecutive transmembrane segments (helical) span residues 10 to 30, 82 to 102, 116 to 136, and 153 to 173; these read WLKVCLHLAGFLPLLWLFWAI, LWCFVWATLHLTSYALLELGI, PYLTLGIISWLVLLALTLTST, and VVYLVAILAPIHYLWSVKILS.

This sequence belongs to the MsrQ family. As to quaternary structure, heterodimer of a catalytic subunit (MsrP) and a heme-binding subunit (MsrQ). It depends on FMN as a cofactor. The cofactor is heme b.

It localises to the cell inner membrane. Functionally, part of the MsrPQ system that repairs oxidized periplasmic proteins containing methionine sulfoxide residues (Met-O), using respiratory chain electrons. Thus protects these proteins from oxidative-stress damage caused by reactive species of oxygen and chlorine generated by the host defense mechanisms. MsrPQ is essential for the maintenance of envelope integrity under bleach stress, rescuing a wide series of structurally unrelated periplasmic proteins from methionine oxidation, including the primary periplasmic chaperone SurA and the lipoprotein Pal. MsrQ provides electrons for reduction to the reductase catalytic subunit MsrP, using the quinone pool of the respiratory chain. In Salmonella dublin (strain CT_02021853), this protein is Protein-methionine-sulfoxide reductase heme-binding subunit MsrQ.